Here is an 883-residue protein sequence, read N- to C-terminus: Puromycin-sensitive aminopeptidase (883 aa).

Residues E125 and 265–269 (GAMEN) each bind substrate. Residue H301 participates in Zn(2+) binding. The active-site Proton acceptor is the E302. Positions 305 and 324 each coordinate Zn(2+).

It belongs to the peptidase M1 family. The cofactor is Zn(2+).

It carries out the reaction Release of an N-terminal amino acid, preferentially alanine, from a wide range of peptides, amides and arylamides.. Its activity is regulated as follows. Strongly inhibited by puromycin and DAMPAQ-22. Functionally, aminopeptidase with broad substrate specificity for several peptides. Involved in proteolytic events essential for cell growth and viability. Plays an essential role during prophase I of meiosis. Required for correct meiotic reconbination in both male and female gametophytes. This Arabidopsis thaliana (Mouse-ear cress) protein is Puromycin-sensitive aminopeptidase (MPA1).